Reading from the N-terminus, the 1435-residue chain is Gag-Pol polyprotein (1435 aa).

The N-myristoyl glycine; by host moiety is linked to residue glycine 2. Positions 7 to 31 (VLSAGELDKWEKIRLRPGGKKQYRL) are interaction with Gp41. The segment at 8–43 (LSAGELDKWEKIRLRPGGKKQYRLKHIVWASRELER) is interaction with host CALM1. Residues 12 to 19 (ELDKWEKI) are interaction with host AP3D1. An interaction with membrane phosphatidylinositol 4,5-bisphosphate and RNA region spans residues 14–33 (DKWEKIRLRPGGKKQYRLKH). Residues 16-22 (WEKIRLR) carry the Nuclear export signal motif. Residues 26–32 (KKQYRLK) carry the Nuclear localization signal motif. An interaction with membrane phosphatidylinositol 4,5-bisphosphate region spans residues 73–77 (EELRS). Residues 106-128 (EEQNKSKKKAQQAAADTGNSSQV) are disordered. Residue tyrosine 132 is modified to Phosphotyrosine; by host. The interval 189 to 227 (NTVGGHQAAMQMLKETINEEAAEWDRLHPVHAGPIAPGQ) is interaction with human PPIA/CYPA and NUP153. The tract at residues 277–363 (YSPTSILDIR…GGPGHKARVL (87 aa)) is dimerization/Multimerization of capsid protein p24. 2 CCHC-type zinc fingers span residues 390-407 (VKCFNCGKEGHIAKNCRA) and 411-428 (KGCWKCGKEGHQMKDCTE). Residues 489-493 (PQITL) are dimerization of protease. The Peptidase A2 domain occupies 508–577 (KEALLDTGAD…TPVNIIGRNL (70 aa)). Aspartate 513 (for protease activity; shared with dimeric partner) is an active-site residue. Dimerization of protease regions lie at residues 537 to 543 (GIGGFIK) and 576 to 588 (NLLTQIGCTLNFP). The Reverse transcriptase domain maps to 631-821 (EGKISKIGPE…PPFLWMGYEL (191 aa)). Aspartate 697, aspartate 772, and aspartate 773 together coordinate Mg(2+). Positions 814–822 (FLWMGYELH) are RT 'primer grip'. The Tryptophan repeat motif motif lies at 985–1001 (WETWWTEYWQATWIPEW). In terms of domain architecture, RNase H type-1 spans 1021 to 1144 (IIGAETFYVD…VDKLVSAGIR (124 aa)). Mg(2+) is bound by residues aspartate 1030, glutamate 1065, aspartate 1085, and aspartate 1136. The Integrase-type zinc-finger motif lies at 1150-1191 (DGIDKAQEEHEKYHSNWRAMASDFNLPPVVAKEIVASCDKCQ). Histidine 1159, histidine 1163, cysteine 1187, and cysteine 1190 together coordinate Zn(2+). One can recognise an Integrase catalytic domain in the interval 1201-1351 (VDCSPGIWQL…SAGERIVDII (151 aa)). Positions 1211, 1263, and 1299 each coordinate Mg(2+). Positions 1370–1417 (FRVYYRDSRDPLWKGPAKLLWKGEGAVVIQDNSDIKVVPRRKAKIIRD) form a DNA-binding region, integrase-type.

In terms of assembly, homotrimer; further assembles as hexamers of trimers. Interacts with gp41 (via C-terminus). Interacts with host CALM1; this interaction induces a conformational change in the Matrix protein, triggering exposure of the myristate group. Interacts with host AP3D1; this interaction allows the polyprotein trafficking to multivesicular bodies during virus assembly. Part of the pre-integration complex (PIC) which is composed of viral genome, matrix protein, Vpr and integrase. Homodimer; the homodimer further multimerizes as homohexamers or homopentamers. Interacts with human PPIA/CYPA; This interaction stabilizes the capsid. Interacts with human NUP153. Interacts with host PDZD8; this interaction stabilizes the capsid. Interacts with monkey TRIM5; this interaction destabilizes the capsid. As to quaternary structure, homodimer, whose active site consists of two apposed aspartic acid residues. In terms of assembly, heterodimer of p66 RT and p51 RT (RT p66/p51). Heterodimerization of RT is essential for DNA polymerase activity. The overall folding of the subdomains is similar in p66 RT and p51 RT but the spatial arrangements of the subdomains are dramatically different. Homotetramer; may further associate as a homohexadecamer. Part of the pre-integration complex (PIC) which is composed of viral genome, matrix protein, Vpr and integrase. Interacts with human SMARCB1/INI1 and human PSIP1/LEDGF isoform 1. Interacts with human KPNA3; this interaction might play a role in nuclear import of the pre-integration complex. Interacts with human NUP153; this interaction might play a role in nuclear import of the pre-integration complex. Mg(2+) serves as cofactor. In terms of processing, specific enzymatic cleavages by the viral protease yield mature proteins. The protease is released by autocatalytic cleavage. The polyprotein is cleaved during and after budding, this process is termed maturation. Proteolytic cleavage of p66 RT removes the RNase H domain to yield the p51 RT subunit. Nucleocapsid protein p7 might be further cleaved after virus entry. Post-translationally, tyrosine phosphorylated presumably in the virion by a host kinase. Phosphorylation is apparently not a major regulator of membrane association. Phosphorylated possibly by host MAPK1; this phosphorylation is necessary for Pin1-mediated virion uncoating. In terms of processing, methylated by host PRMT6, impairing its function by reducing RNA annealing and the initiation of reverse transcription.

Its subcellular location is the host cell membrane. The protein localises to the host endosome. It is found in the host multivesicular body. It localises to the virion membrane. The protein resides in the host nucleus. Its subcellular location is the host cytoplasm. The protein localises to the virion. It catalyses the reaction Specific for a P1 residue that is hydrophobic, and P1' variable, but often Pro.. The catalysed reaction is Endohydrolysis of RNA in RNA/DNA hybrids. Three different cleavage modes: 1. sequence-specific internal cleavage of RNA. Human immunodeficiency virus type 1 and Moloney murine leukemia virus enzymes prefer to cleave the RNA strand one nucleotide away from the RNA-DNA junction. 2. RNA 5'-end directed cleavage 13-19 nucleotides from the RNA end. 3. DNA 3'-end directed cleavage 15-20 nucleotides away from the primer terminus.. It carries out the reaction 3'-end directed exonucleolytic cleavage of viral RNA-DNA hybrid.. The enzyme catalyses DNA(n) + a 2'-deoxyribonucleoside 5'-triphosphate = DNA(n+1) + diphosphate. Protease: The viral protease is inhibited by many synthetic protease inhibitors (PIs), such as amprenavir, atazanavir, indinavir, loprinavir, nelfinavir, ritonavir and saquinavir. Use of protease inhibitors in tritherapy regimens permit more ambitious therapeutic strategies. Reverse transcriptase/ribonuclease H: RT can be inhibited either by nucleoside RT inhibitors (NRTIs) or by non nucleoside RT inhibitors (NNRTIs). NRTIs act as chain terminators, whereas NNRTIs inhibit DNA polymerization by binding a small hydrophobic pocket near the RT active site and inducing an allosteric change in this region. Classical NRTIs are abacavir, adefovir (PMEA), didanosine (ddI), lamivudine (3TC), stavudine (d4T), tenofovir (PMPA), zalcitabine (ddC), and zidovudine (AZT). Classical NNRTIs are atevirdine (BHAP U-87201E), delavirdine, efavirenz (DMP-266), emivirine (I-EBU), and nevirapine (BI-RG-587). The tritherapies used as a basic effective treatment of AIDS associate two NRTIs and one NNRTI. Mediates, with Gag polyprotein, the essential events in virion assembly, including binding the plasma membrane, making the protein-protein interactions necessary to create spherical particles, recruiting the viral Env proteins, and packaging the genomic RNA via direct interactions with the RNA packaging sequence (Psi). Gag-Pol polyprotein may regulate its own translation, by the binding genomic RNA in the 5'-UTR. At low concentration, the polyprotein would promote translation, whereas at high concentration, the polyprotein would encapsidate genomic RNA and then shut off translation. In terms of biological role, targets the polyprotein to the plasma membrane via a multipartite membrane-binding signal, that includes its myristoylated N-terminus. Matrix protein is part of the pre-integration complex. Implicated in the release from host cell mediated by Vpu. Binds to RNA. Functionally, forms the conical core that encapsulates the genomic RNA-nucleocapsid complex in the virion. Most core are conical, with only 7% tubular. The core is constituted by capsid protein hexamer subunits. The core is disassembled soon after virion entry. Host restriction factors such as TRIM5-alpha or TRIMCyp bind retroviral capsids and cause premature capsid disassembly, leading to blocks in reverse transcription. Capsid restriction by TRIM5 is one of the factors which restricts HIV-1 to the human species. Host PIN1 apparently facilitates the virion uncoating. On the other hand, interactions with PDZD8 or CYPA stabilize the capsid. Its function is as follows. Encapsulates and protects viral dimeric unspliced genomic RNA (gRNA). Binds these RNAs through its zinc fingers. Acts as a nucleic acid chaperone which is involved in rearangement of nucleic acid secondary structure during gRNA retrotranscription. Also facilitates template switch leading to recombination. As part of the polyprotein, participates in gRNA dimerization, packaging, tRNA incorporation and virion assembly. Aspartyl protease that mediates proteolytic cleavages of Gag and Gag-Pol polyproteins during or shortly after the release of the virion from the plasma membrane. Cleavages take place as an ordered, step-wise cascade to yield mature proteins. This process is called maturation. Displays maximal activity during the budding process just prior to particle release from the cell. Also cleaves Nef and Vif, probably concomitantly with viral structural proteins on maturation of virus particles. Hydrolyzes host EIF4GI and PABP1 in order to shut off the capped cellular mRNA translation. The resulting inhibition of cellular protein synthesis serves to ensure maximal viral gene expression and to evade host immune response. Also mediates cleavage of host YTHDF3. Mediates cleavage of host CARD8, thereby activating the CARD8 inflammasome, leading to the clearance of latent HIV-1 in patient CD4(+) T-cells after viral reactivation; in contrast, HIV-1 can evade CARD8-sensing when its protease remains inactive in infected cells prior to viral budding. In terms of biological role, multifunctional enzyme that converts the viral RNA genome into dsDNA in the cytoplasm, shortly after virus entry into the cell. This enzyme displays a DNA polymerase activity that can copy either DNA or RNA templates, and a ribonuclease H (RNase H) activity that cleaves the RNA strand of RNA-DNA heteroduplexes in a partially processive 3' to 5' endonucleasic mode. Conversion of viral genomic RNA into dsDNA requires many steps. A tRNA(3)-Lys binds to the primer-binding site (PBS) situated at the 5'-end of the viral RNA. RT uses the 3' end of the tRNA primer to perform a short round of RNA-dependent minus-strand DNA synthesis. The reading proceeds through the U5 region and ends after the repeated (R) region which is present at both ends of viral RNA. The portion of the RNA-DNA heteroduplex is digested by the RNase H, resulting in a ssDNA product attached to the tRNA primer. This ssDNA/tRNA hybridizes with the identical R region situated at the 3' end of viral RNA. This template exchange, known as minus-strand DNA strong stop transfer, can be either intra- or intermolecular. RT uses the 3' end of this newly synthesized short ssDNA to perform the RNA-dependent minus-strand DNA synthesis of the whole template. RNase H digests the RNA template except for two polypurine tracts (PPTs) situated at the 5'-end and near the center of the genome. It is not clear if both polymerase and RNase H activities are simultaneous. RNase H probably can proceed both in a polymerase-dependent (RNA cut into small fragments by the same RT performing DNA synthesis) and a polymerase-independent mode (cleavage of remaining RNA fragments by free RTs). Secondly, RT performs DNA-directed plus-strand DNA synthesis using the PPTs that have not been removed by RNase H as primers. PPTs and tRNA primers are then removed by RNase H. The 3' and 5' ssDNA PBS regions hybridize to form a circular dsDNA intermediate. Strand displacement synthesis by RT to the PBS and PPT ends produces a blunt ended, linear dsDNA copy of the viral genome that includes long terminal repeats (LTRs) at both ends. Functionally, catalyzes viral DNA integration into the host chromosome, by performing a series of DNA cutting and joining reactions. This enzyme activity takes place after virion entry into a cell and reverse transcription of the RNA genome in dsDNA. The first step in the integration process is 3' processing. This step requires a complex comprising the viral genome, matrix protein, Vpr and integrase. This complex is called the pre-integration complex (PIC). The integrase protein removes 2 nucleotides from each 3' end of the viral DNA, leaving recessed CA OH's at the 3' ends. In the second step, the PIC enters cell nucleus. This process is mediated through integrase and Vpr proteins, and allows the virus to infect a non dividing cell. This ability to enter the nucleus is specific of lentiviruses, other retroviruses cannot and rely on cell division to access cell chromosomes. In the third step, termed strand transfer, the integrase protein joins the previously processed 3' ends to the 5' ends of strands of target cellular DNA at the site of integration. The 5'-ends are produced by integrase-catalyzed staggered cuts, 5 bp apart. A Y-shaped, gapped, recombination intermediate results, with the 5'-ends of the viral DNA strands and the 3' ends of target DNA strands remaining unjoined, flanking a gap of 5 bp. The last step is viral DNA integration into host chromosome. This involves host DNA repair synthesis in which the 5 bp gaps between the unjoined strands are filled in and then ligated. Since this process occurs at both cuts flanking the HIV genome, a 5 bp duplication of host DNA is produced at the ends of HIV-1 integration. Alternatively, Integrase may catalyze the excision of viral DNA just after strand transfer, this is termed disintegration. The protein is Gag-Pol polyprotein (gag-pol) of Homo sapiens (Human).